Here is a 141-residue protein sequence, read N- to C-terminus: Large ribosomal subunit protein uL11 (141 aa).

It belongs to the universal ribosomal protein uL11 family. As to quaternary structure, part of the ribosomal stalk of the 50S ribosomal subunit. Interacts with L10 and the large rRNA to form the base of the stalk. L10 forms an elongated spine to which L12 dimers bind in a sequential fashion forming a multimeric L10(L12)X complex. One or more lysine residues are methylated.

Its function is as follows. Forms part of the ribosomal stalk which helps the ribosome interact with GTP-bound translation factors. The chain is Large ribosomal subunit protein uL11 from Trichlorobacter lovleyi (strain ATCC BAA-1151 / DSM 17278 / SZ) (Geobacter lovleyi).